A 187-amino-acid chain; its full sequence is Reactive Intermediate Deaminase A, chloroplastic (187 aa).

The N-terminal 58 residues, 1–58 (MTWSVFRSINTPTLDLSTALRSTRTPLVAAGVGCATFAGVSLFRMSSRSPPFASLSVS), are a transit peptide targeting the chloroplast. Arg165 is a binding site for substrate.

The protein belongs to the RutC family. In terms of tissue distribution, expressed in leaves, petiols, petals, carpels and shoot apex.

Its subcellular location is the plastid. It localises to the chloroplast. The catalysed reaction is 2-iminobutanoate + H2O = 2-oxobutanoate + NH4(+). It carries out the reaction 2-iminopropanoate + H2O = pyruvate + NH4(+). Its pathway is amino-acid biosynthesis; L-isoleucine biosynthesis; 2-oxobutanoate from L-threonine. In terms of biological role, hydrolyzes the Ser-derived enamine/imine product of Thr dehydratase, protecting the plastidial branched-chain aminotransferase BCAT3 (AC Q9M401) from inactivation. Involved in Ile biosynthesis. The chain is Reactive Intermediate Deaminase A, chloroplastic from Arabidopsis thaliana (Mouse-ear cress).